A 780-amino-acid polypeptide reads, in one-letter code: Kazrin (780 aa).

Residues 79–261 (AQVLLREEVV…LATLTKDVPK (183 aa)) are a coiled coil. Residues 295 to 430 (QQTLYHSHPP…TRHSLSLSEG (136 aa)) are disordered. A phosphoserine mark is found at Ser-357, Ser-372, and Ser-392. Residues 416–427 (SQCSPTRHSLSL) are compositionally biased toward polar residues. SAM domains lie at 451–516 (WKAG…YRDA), 529–593 (DHHW…LYQV), and 617–684 (WTNQ…STVF). The interval 692 to 780 (IRESERFGTP…EYSSLEVTNV (89 aa)) is disordered. Over residues 760–771 (LQGRPEQCRLEE) the composition is skewed to basic and acidic residues.

Belongs to the kazrin family.

Its subcellular location is the cell junction. The protein resides in the nucleus. It is found in the cytoplasm. It localises to the cytoskeleton. Component of the cornified envelope of keratinocytes. May be involved in the interplay between adherens junctions and desmosomes. The function in the nucleus is not known. This Rattus norvegicus (Rat) protein is Kazrin (Kazn).